Consider the following 105-residue polypeptide: Vacuolar ATPase assembly integral membrane protein VMA21 homolog (105 aa).

The segment at 1–26 (MSTKNKKAAGGNGGAPKQTRQQSHDS) is disordered. Residues 1–36 (MSTKNKKAAGGNGGAPKQTRQQSHDSQDYSSFKTVL) are Cytoplasmic-facing. Residues 37–57 (FYCMLIVFLPVLTFFVLKGFV) form a helical membrane-spanning segment. Topologically, residues 58 to 68 (LDQFLNISEVK) are lumenal. A helical transmembrane segment spans residues 69–89 (VNIASAVGAVVALHIALGLYI). The Cytoplasmic segment spans residues 90-105 (YRAYFGAPGSKGSKTD).

Belongs to the VMA21 family.

The protein resides in the endoplasmic reticulum membrane. Its subcellular location is the endoplasmic reticulum-Golgi intermediate compartment membrane. The protein localises to the cytoplasmic vesicle. It is found in the COPII-coated vesicle membrane. Its function is as follows. Required for the assembly of the V0 complex of the vacuolar ATPase (V-ATPase) in the endoplasmic reticulum. The protein is Vacuolar ATPase assembly integral membrane protein VMA21 homolog of Drosophila sechellia (Fruit fly).